A 613-amino-acid chain; its full sequence is Dihydroxy-acid dehydratase (613 aa).

Aspartate 81 is a Mg(2+) binding site. [2Fe-2S] cluster is bound at residue cysteine 122. Mg(2+) contacts are provided by aspartate 123 and lysine 124. Lysine 124 bears the N6-carboxylysine mark. A [2Fe-2S] cluster-binding site is contributed by cysteine 195. Mg(2+) is bound at residue glutamate 491. The active-site Proton acceptor is the serine 517.

It belongs to the IlvD/Edd family. Homodimer. The cofactor is [2Fe-2S] cluster. Mg(2+) is required as a cofactor.

The enzyme catalyses (2R)-2,3-dihydroxy-3-methylbutanoate = 3-methyl-2-oxobutanoate + H2O. It carries out the reaction (2R,3R)-2,3-dihydroxy-3-methylpentanoate = (S)-3-methyl-2-oxopentanoate + H2O. The protein operates within amino-acid biosynthesis; L-isoleucine biosynthesis; L-isoleucine from 2-oxobutanoate: step 3/4. Its pathway is amino-acid biosynthesis; L-valine biosynthesis; L-valine from pyruvate: step 3/4. Its function is as follows. Functions in the biosynthesis of branched-chain amino acids. Catalyzes the dehydration of (2R,3R)-2,3-dihydroxy-3-methylpentanoate (2,3-dihydroxy-3-methylvalerate) into 2-oxo-3-methylpentanoate (2-oxo-3-methylvalerate) and of (2R)-2,3-dihydroxy-3-methylbutanoate (2,3-dihydroxyisovalerate) into 2-oxo-3-methylbutanoate (2-oxoisovalerate), the penultimate precursor to L-isoleucine and L-valine, respectively. This chain is Dihydroxy-acid dehydratase, found in Nitrobacter hamburgensis (strain DSM 10229 / NCIMB 13809 / X14).